The chain runs to 383 residues: S-adenosylmethionine synthase (383 aa).

Residue histidine 15 coordinates ATP. Residue aspartate 17 coordinates Mg(2+). Glutamate 43 lines the K(+) pocket. 2 residues coordinate L-methionine: glutamate 56 and glutamine 99. Residues 99–109 form a flexible loop region; that stretch reads QSPDINQGVDR. ATP-binding positions include 164–166, 230–231, aspartate 239, 245–246, alanine 262, and lysine 266; these read DAK, RF, and RK. Residue aspartate 239 coordinates L-methionine. Residue lysine 270 coordinates L-methionine.

The protein belongs to the AdoMet synthase family. Homotetramer; dimer of dimers. It depends on Mg(2+) as a cofactor. K(+) serves as cofactor.

It is found in the cytoplasm. The enzyme catalyses L-methionine + ATP + H2O = S-adenosyl-L-methionine + phosphate + diphosphate. Its pathway is amino-acid biosynthesis; S-adenosyl-L-methionine biosynthesis; S-adenosyl-L-methionine from L-methionine: step 1/1. Functionally, catalyzes the formation of S-adenosylmethionine (AdoMet) from methionine and ATP. The overall synthetic reaction is composed of two sequential steps, AdoMet formation and the subsequent tripolyphosphate hydrolysis which occurs prior to release of AdoMet from the enzyme. This is S-adenosylmethionine synthase from Actinobacillus pleuropneumoniae serotype 7 (strain AP76).